A 186-amino-acid chain; its full sequence is Inner membrane-spanning protein YciB (186 aa).

The next 5 membrane-spanning stretches (helical) occupy residues 10-30, 47-67, 76-96, 121-141, and 149-169; these read IILF…AVAI, VEPL…ATLL, WKPT…QLMF, WGWT…AYHF, and FKLF…ALYL.

This sequence belongs to the YciB family.

The protein localises to the cell inner membrane. In terms of biological role, plays a role in cell envelope biogenesis, maintenance of cell envelope integrity and membrane homeostasis. The chain is Inner membrane-spanning protein YciB from Acidovorax ebreus (strain TPSY) (Diaphorobacter sp. (strain TPSY)).